The following is a 220-amino-acid chain: Probable nicotinate-nucleotide adenylyltransferase (220 aa).

The protein belongs to the NadD family.

The catalysed reaction is nicotinate beta-D-ribonucleotide + ATP + H(+) = deamido-NAD(+) + diphosphate. It functions in the pathway cofactor biosynthesis; NAD(+) biosynthesis; deamido-NAD(+) from nicotinate D-ribonucleotide: step 1/1. Catalyzes the reversible adenylation of nicotinate mononucleotide (NaMN) to nicotinic acid adenine dinucleotide (NaAD). The sequence is that of Probable nicotinate-nucleotide adenylyltransferase from Yersinia enterocolitica serotype O:8 / biotype 1B (strain NCTC 13174 / 8081).